The sequence spans 144 residues: Protein MIX23 (144 aa).

Ala2 carries the post-translational modification N-acetylalanine. Residues 82 to 120 (VKSLREEREKNLDDLTLLKRLRKEQTKLKWMQSELNVEE) are a coiled coil. Lys100 carries the N6-acetyllysine modification.

Belongs to the MIX23 family.

In Mus musculus (Mouse), this protein is Protein MIX23.